The sequence spans 220 residues: Iron-sulfur flavoprotein AF_1436 (220 aa).

Positions 47, 50, 53, and 59 each coordinate [4Fe-4S] cluster.

This sequence belongs to the SsuE family. Isf subfamily. In terms of assembly, homodimer. FMN serves as cofactor. It depends on [4Fe-4S] cluster as a cofactor.

In terms of biological role, redox-active protein probably involved in electron transport. The chain is Iron-sulfur flavoprotein AF_1436 from Archaeoglobus fulgidus (strain ATCC 49558 / DSM 4304 / JCM 9628 / NBRC 100126 / VC-16).